The chain runs to 181 residues: Adenine phosphoribosyltransferase (181 aa).

This sequence belongs to the purine/pyrimidine phosphoribosyltransferase family. Homodimer.

It localises to the cytoplasm. The enzyme catalyses AMP + diphosphate = 5-phospho-alpha-D-ribose 1-diphosphate + adenine. It participates in purine metabolism; AMP biosynthesis via salvage pathway; AMP from adenine: step 1/1. Catalyzes a salvage reaction resulting in the formation of AMP, that is energically less costly than de novo synthesis. The sequence is that of Adenine phosphoribosyltransferase (Aprt) from Drosophila pseudoobscura pseudoobscura (Fruit fly).